We begin with the raw amino-acid sequence, 473 residues long: FAD-dependent monooxygenase ctvC (473 aa).

FAD contacts are provided by E37, A51, and R110. The helical transmembrane segment at 218-238 (IGPGFTFLIFPAAGDSLFWVL) threads the bilayer. 2 residues coordinate FAD: D310 and A323. Residue N358 is glycosylated (N-linked (GlcNAc...) asparagine). A helical transmembrane segment spans residues 451-471 (LVYCFGVVILLWISWAVFNVN).

Belongs to the paxM FAD-dependent monooxygenase family. FAD is required as a cofactor.

The protein localises to the membrane. It functions in the pathway mycotoxin biosynthesis. Functionally, FAD-dependent monooxygenase; part of the gene cluster that mediates the biosynthesis of citreoviridin, an inhibitor of the of F1-ATPase beta-subunit. The HR-PKS ctvA accepts acetyl-CoA as the starter unit and catalyzes eight iterations of malonyl-CoA extension and four iterations of SAM-dependent methylation at C4, C12, C14, and C16. The KR and DH domains selectively act on the first six iterations to generate the hexaene chain. In the last three iterations, the KR and DH domains terminate their functions to yield a beta,delta-diketo ester moiety, which then undergoes intramolecular cyclization to yield an alpha-pyrone intermediate. Subsequently, ctvB methylates the alpha-pyrone hydroxyl group to generate citreomontanin. In order to form the tetrahydrofuran ring with the correct stereochemistry, the terminal alkenes of citreomontanin need to undergo isomerization to yield a (17Z)-hexaene, a step that could be catalyzed by ctvC. The (17Z)-hexaene then undergoes bisepoxidation by ctvC to form a (17R,16R,15S,14R)-bisepoxide moiety. Lastly, ctvD acts as a regioselective hydrolase to form the tetrahydrofuran ring with the substituents in the correct absolute configuration, completing the biosynthesis of citreoviridin. This chain is FAD-dependent monooxygenase ctvC, found in Aspergillus terreus (strain NIH 2624 / FGSC A1156).